The following is a 77-amino-acid chain: Large ribosomal subunit protein bL28 (77 aa).

It belongs to the bacterial ribosomal protein bL28 family.

The polypeptide is Large ribosomal subunit protein bL28 (Polynucleobacter necessarius subsp. necessarius (strain STIR1)).